Consider the following 346-residue polypeptide: tRNA N6-adenosine threonylcarbamoyltransferase (346 aa).

Residues His111 and His115 each contribute to the Fe cation site. Substrate-binding positions include 134–138 (LVSGG), Asp167, Gly180, Asp184, and Asn279. Fe cation is bound at residue Asp307.

The protein belongs to the KAE1 / TsaD family. Requires Fe(2+) as cofactor.

It is found in the cytoplasm. It catalyses the reaction L-threonylcarbamoyladenylate + adenosine(37) in tRNA = N(6)-L-threonylcarbamoyladenosine(37) in tRNA + AMP + H(+). In terms of biological role, required for the formation of a threonylcarbamoyl group on adenosine at position 37 (t(6)A37) in tRNAs that read codons beginning with adenine. Is involved in the transfer of the threonylcarbamoyl moiety of threonylcarbamoyl-AMP (TC-AMP) to the N6 group of A37, together with TsaE and TsaB. TsaD likely plays a direct catalytic role in this reaction. This Nostoc sp. (strain PCC 7120 / SAG 25.82 / UTEX 2576) protein is tRNA N6-adenosine threonylcarbamoyltransferase.